A 143-amino-acid chain; its full sequence is Cofilin (143 aa).

In terms of domain architecture, ADF-H spans glycine 5–serine 137.

Belongs to the actin-binding proteins ADF family.

Its subcellular location is the cytoplasm. It localises to the cytoskeleton. It is found in the nucleus matrix. Functionally, controls reversibly actin polymerization and depolymerization in a pH-sensitive manner. It has the ability to bind G- and F-actin in a 1:1 ratio of cofilin to actin. Binding to F-actin is regulated by tropomyosin. It is the major component of intranuclear and cytoplasmic actin rods. Required for accumulation of actin at the cell division site via depolymerizing actin at the cell ends. In association with myosin II has a role in the assembly of the contractile ring via severing actin filaments. Involved in the maintenance of the contractile ring once formed. In association with profilin and capping protein, has a role in the mitotic reorganization of the actin cytoskeleton. In Ogataea parapolymorpha (strain ATCC 26012 / BCRC 20466 / JCM 22074 / NRRL Y-7560 / DL-1) (Yeast), this protein is Cofilin (COF1).